The following is a 56-amino-acid chain: Sex-specific storage protein 1 (56 aa).

The protein belongs to the hemocyanin family. As to expression, expressed in fat body and ovary.

It is found in the secreted. In terms of biological role, larval storage protein (LSP) which may serve as a store of amino acids for synthesis of adult proteins. The biosynthesis, accumulation and sequestration of storage protein-1 takes place during metamorphosis and saves energy for the non-feeding pupal stage. May also be essential for egg formation. The polypeptide is Sex-specific storage protein 1 (Amsacta albistriga (Red hairy caterpillar)).